The sequence spans 469 residues: ATP synthase subunit beta (469 aa).

157–164 (GGAGVGKT) is a binding site for ATP.

It belongs to the ATPase alpha/beta chains family. As to quaternary structure, F-type ATPases have 2 components, CF(1) - the catalytic core - and CF(0) - the membrane proton channel. CF(1) has five subunits: alpha(3), beta(3), gamma(1), delta(1), epsilon(1). CF(0) has three main subunits: a(1), b(2) and c(9-12). The alpha and beta chains form an alternating ring which encloses part of the gamma chain. CF(1) is attached to CF(0) by a central stalk formed by the gamma and epsilon chains, while a peripheral stalk is formed by the delta and b chains.

It localises to the cell membrane. It catalyses the reaction ATP + H2O + 4 H(+)(in) = ADP + phosphate + 5 H(+)(out). Functionally, produces ATP from ADP in the presence of a proton gradient across the membrane. The catalytic sites are hosted primarily by the beta subunits. The polypeptide is ATP synthase subunit beta (Brevibacillus brevis (strain 47 / JCM 6285 / NBRC 100599)).